A 164-amino-acid polypeptide reads, in one-letter code: Phosphopantetheine adenylyltransferase (164 aa).

Thr-9 contacts substrate. ATP contacts are provided by residues 9 to 10 and His-17; that span reads TF. Substrate contacts are provided by Lys-41, Leu-73, and Arg-87. ATP is bound by residues 88–90, Glu-98, and 123–129; these read GLR and YMFISAT.

The protein belongs to the bacterial CoaD family. As to quaternary structure, homohexamer. Requires Mg(2+) as cofactor.

The protein resides in the cytoplasm. It carries out the reaction (R)-4'-phosphopantetheine + ATP + H(+) = 3'-dephospho-CoA + diphosphate. The protein operates within cofactor biosynthesis; coenzyme A biosynthesis; CoA from (R)-pantothenate: step 4/5. In terms of biological role, reversibly transfers an adenylyl group from ATP to 4'-phosphopantetheine, yielding dephospho-CoA (dPCoA) and pyrophosphate. The polypeptide is Phosphopantetheine adenylyltransferase (Nitrosomonas eutropha (strain DSM 101675 / C91 / Nm57)).